Consider the following 446-residue polypeptide: Probable glycine dehydrogenase (decarboxylating) subunit 1 (446 aa).

It belongs to the GcvP family. N-terminal subunit subfamily. The glycine cleavage system is composed of four proteins: P, T, L and H. In this organism, the P 'protein' is a heterodimer of two subunits.

It catalyses the reaction N(6)-[(R)-lipoyl]-L-lysyl-[glycine-cleavage complex H protein] + glycine + H(+) = N(6)-[(R)-S(8)-aminomethyldihydrolipoyl]-L-lysyl-[glycine-cleavage complex H protein] + CO2. Its function is as follows. The glycine cleavage system catalyzes the degradation of glycine. The P protein binds the alpha-amino group of glycine through its pyridoxal phosphate cofactor; CO(2) is released and the remaining methylamine moiety is then transferred to the lipoamide cofactor of the H protein. In Desulfitobacterium hafniense (strain DSM 10664 / DCB-2), this protein is Probable glycine dehydrogenase (decarboxylating) subunit 1.